The chain runs to 391 residues: Lipid-A-disaccharide synthase (391 aa).

The protein belongs to the LpxB family.

It catalyses the reaction a lipid X + a UDP-2-N,3-O-bis[(3R)-3-hydroxyacyl]-alpha-D-glucosamine = a lipid A disaccharide + UDP + H(+). The protein operates within bacterial outer membrane biogenesis; LPS lipid A biosynthesis. Condensation of UDP-2,3-diacylglucosamine and 2,3-diacylglucosamine-1-phosphate to form lipid A disaccharide, a precursor of lipid A, a phosphorylated glycolipid that anchors the lipopolysaccharide to the outer membrane of the cell. In Rickettsia akari (strain Hartford), this protein is Lipid-A-disaccharide synthase.